The sequence spans 271 residues: Elongation factor Ts (271 aa).

The involved in Mg(2+) ion dislocation from EF-Tu stretch occupies residues 76–79 (TDFV).

The protein belongs to the EF-Ts family.

It is found in the cytoplasm. Associates with the EF-Tu.GDP complex and induces the exchange of GDP to GTP. It remains bound to the aminoacyl-tRNA.EF-Tu.GTP complex up to the GTP hydrolysis stage on the ribosome. This chain is Elongation factor Ts, found in Mycobacterium tuberculosis (strain ATCC 25177 / H37Ra).